Here is a 407-residue protein sequence, read N- to C-terminus: MKYDNLLDRFIKYVKVNTRSDPDSETTPSTESQEAFALTILKPEMEAIGLQDVHYNPVNGYLIGTLPANNPTLTRKIGFIAHMDTADFNAENVNPQIIDNYQGEDITLGSSNYKLDPKAFPNLNNYIGQTLITTDGTTLLGADDKSGIAEIMTAIEFLTSQPQIEHCDIKVAFGPDEEIGVGADKFEVADFEVDFAYTMDGGPLGELQYETFSAAALEVTFLGRNVHPGTAKDQMINALQLAIDFHEKLPAKERPEYTDGYQGFYHLTGLTGTVEEARASYIIRDFEEASFEARKVKVENIAQSMNAQLGTKRVLVELNDQYYNMKKVIEKDMTAIELAKEVMEELTIKPVIEPIRGGTDGSKISFMGIPTPNIFAGGENMHGRFEFVSLQTMERAVDVIIGLVCKA.

Residue H82 coordinates Zn(2+). The active site involves D84. Zn(2+) is bound at residue D143. The active-site Proton acceptor is the E177. Zn(2+) is bound by residues E178, D200, and H382.

This sequence belongs to the peptidase M20B family. Requires Zn(2+) as cofactor.

Its subcellular location is the cytoplasm. It catalyses the reaction Release of the N-terminal residue from a tripeptide.. In terms of biological role, cleaves the N-terminal amino acid of tripeptides. The chain is Peptidase T from Streptococcus pyogenes serotype M6 (strain ATCC BAA-946 / MGAS10394).